We begin with the raw amino-acid sequence, 158 residues long: UPF0262 protein RHOS4_22360 (158 aa).

The protein belongs to the UPF0262 family.

This is UPF0262 protein RHOS4_22360 from Cereibacter sphaeroides (strain ATCC 17023 / DSM 158 / JCM 6121 / CCUG 31486 / LMG 2827 / NBRC 12203 / NCIMB 8253 / ATH 2.4.1.) (Rhodobacter sphaeroides).